We begin with the raw amino-acid sequence, 463 residues long: Interferon-inducible GTPase 5 (463 aa).

The IRG-type G domain maps to 52–234 (TRLEVGVTGE…PMLVTTWEHD (183 aa)). Residues 61–68 (ESGAGKSS), 86–90 (TGVVE), 168–170 (KVD), and 215–217 (SNL) contribute to the GTP site. Ser246 and Ser303 each carry phosphoserine. Positions 409 to 438 (QGEVSLEAAGDNAVEKRSSGEGTSEEAPLS) are disordered.

The protein belongs to the TRAFAC class dynamin-like GTPase superfamily. IRG family.

The protein localises to the cell projection. The protein resides in the cilium. It is found in the flagellum. Its subcellular location is the lipid droplet. It catalyses the reaction GTP + H2O = GDP + phosphate + H(+). Its function is as follows. Required for sperm motility and therefore male fertility, via positive regulation of spermatozoa fibrous sheath formation. This Rattus norvegicus (Rat) protein is Interferon-inducible GTPase 5 (Irgc).